Reading from the N-terminus, the 316-residue chain is HASARGEGFLLLKADCNKGYVTVKQIGVNPTSVDLVDVGKDEEVKMRPGQVLHIVNKLYPFVVQFGEESEESVMEAEEKIQTEKRPCEDSCENDDIENVPKKAKKMEVVDTQSSSADLRPSKSSVSPHEGTTSRKEHLGHWSQGLKSSMQDPKVQVYKDEKTVVIKDKYPKARYHWLVLPWDSISSLKSVTREHLGLLEHMHAVGQKMIQQCPAKESLEFRLGYHAIPSMSQLHLHVISQDFDSPALKTKKHWNSFTTEYFLNSEEVIEMVRSKGKVTVNDQASELLKLPLRCHLCKQQLSTIPQLKEHLKKHWTK.

One can recognise an FHA-like domain in the interval 1–38 (HASARGEGFLLLKADCNKGYVTVKQIGVNPTSVDLVDV). Residues 104 to 142 (KKMEVVDTQSSSADLRPSKSSVSPHEGTTSRKEHLGHWS) form a disordered region. Over residues 110–130 (DTQSSSADLRPSKSSVSPHEG) the composition is skewed to polar residues. Positions 142-247 (SQGLKSSMQD…ISQDFDSPAL (106 aa)) constitute an HIT domain. 2 interaction with DNA substrate regions span residues 167–171 (DKYPK) and 229–230 (SM). A Histidine triad motif motif is present at residues 232–236 (QLHLH). His234 (tele-AMP-histidine intermediate) is an active-site residue. The C2H2-type zinc-finger motif lies at 291-313 (LRCHLCKQQLSTIPQLKEHLKKH).

It localises to the nucleus. It is found in the nucleoplasm. Its subcellular location is the nucleolus. It catalyses the reaction a 5'-end adenosine-5'-diphospho-5'-2'-deoxyribonucleoside-DNA + H2O = a 5'-end 5'-phospho-2'-deoxyribonucleoside-DNA + AMP + 2 H(+). The enzyme catalyses a 5'-end adenosine-5'-diphospho-5'-ribonucleoside-2'-deoxyribonucleotide-DNA + H2O = a 5'-end 5'-phospho-ribonucleoside-2'-deoxyribonucleotide-DNA + AMP + 2 H(+). The catalysed reaction is a 3'-end 2'-deoxyribonucleotide-3'-diphospho-5'-guanosine-DNA + H2O = a 3'-end 2'-deoxyribonucleotide 3'-phosphate-DNA + GMP + 2 H(+). Functionally, DNA-binding protein involved in single-strand DNA break repair, double-strand DNA break repair and base excision repair. Resolves abortive DNA ligation intermediates formed either at base excision sites, or when DNA ligases attempt to repair non-ligatable breaks induced by reactive oxygen species. Catalyzes the release of adenylate groups covalently linked to 5'-phosphate termini, resulting in the production of 5'-phosphate termini that can be efficiently rejoined. Also able to hydrolyze adenosine 5'-monophosphoramidate (AMP-NH(2)) and diadenosine tetraphosphate (AppppA), but with lower catalytic activity. Likewise, catalyzes the release of 3'-linked guanosine (DNAppG) and inosine (DNAppI) from DNA, but has higher specific activity with 5'-linked adenosine (AppDNA). This is Aprataxin (APTX) from Gallus gallus (Chicken).